Consider the following 63-residue polypeptide: Kappa-theraphotoxin-Gr3a (63 aa).

The N-terminal stretch at 1-21 is a signal peptide; that stretch reads MKTSVFVLVLGLVLLFAVSFA. The propeptide occupies 22–29; sequence TEMEESAR. 3 disulfide bridges follow: C31/C45, C38/C50, and C44/C57.

This sequence belongs to the neurotoxin 10 (Hwtx-1) family. 63 (VsTx1) subfamily. In terms of tissue distribution, expressed by the venom gland.

The protein localises to the secreted. Its function is as follows. Inhibits sodium channels Nav1.7/SCN9A and potassium channels Kv11.1/KCNH2. Also binds the voltage-sensor domain of the potassium channel KvAP (from the archaeon Aeropyrum pernix) with very slow apparent binding kinetics and affects channel gating. Reaches its target by dynamically partitioning into anionic or zwitterionic headgroup lipid membranes. May bind to the open state of KvAP. The chain is Kappa-theraphotoxin-Gr3a from Grammostola rosea (Chilean rose tarantula).